The following is a 498-amino-acid chain: DNA-directed RNA polymerase subunit Rpo2N (498 aa).

This sequence belongs to the RNA polymerase beta chain family. Part of the RNA polymerase complex.

It is found in the cytoplasm. It carries out the reaction RNA(n) + a ribonucleoside 5'-triphosphate = RNA(n+1) + diphosphate. Functionally, DNA-dependent RNA polymerase (RNAP) catalyzes the transcription of DNA into RNA using the four ribonucleoside triphosphates as substrates. The Rpo2 subunit (Rpo2N and Rpo2C in this organism) is implicated in DNA promoter recognition and in nucleotide binding. This is DNA-directed RNA polymerase subunit Rpo2N from Methanocaldococcus jannaschii (strain ATCC 43067 / DSM 2661 / JAL-1 / JCM 10045 / NBRC 100440) (Methanococcus jannaschii).